A 635-amino-acid chain; its full sequence is Iron transport multicopper oxidase FET3 (635 aa).

Positions 1-17 (MMVPLLLSTYFITAVYG) are cleaved as a signal peptide. Residues 18–559 (ATHTFHWTTG…KSIPTGFTKK (542 aa)) are Extracellular-facing. Plastocyanin-like domains follow at residues 42-140 (ITCN…FVIE) and 190-292 (NLIL…LQLN). N-linked (GlcNAc...) asparagine glycosylation is found at Asn-70 and Asn-73. His-77 and His-79 together coordinate Cu cation. N-linked (GlcNAc...) asparagine glycosylation is present at Asn-109. His-122 and His-124 together coordinate Cu cation. N-linked (GlcNAc...) asparagine glycosylation is found at Asn-194, Asn-198, Asn-244, Asn-265, Asn-292, and Asn-359. The 120-residue stretch at 382 to 501 (NPFIYGTNTN…QGLAVVMVED (120 aa)) folds into the Plastocyanin-like 3 domain. 3 residues coordinate Cu cation: His-413, His-416, and His-418. N-linked (GlcNAc...) asparagine glycosylation occurs at Asn-443. His-483, Cys-484, His-485, and His-489 together coordinate Cu cation. The N-linked (GlcNAc...) asparagine glycan is linked to Asn-535. The chain crosses the membrane as a helical span at residues 560 to 580 (GIIAMTFSCLAGVLGITMIAI). The Cytoplasmic portion of the chain corresponds to 581-628 (YGFSEIPEPEIKVMRNLHLNPEDVLEKTSSSSVISASNSSSLEDSRNQ).

This sequence belongs to the multicopper oxidase family. Requires Cu cation as cofactor.

The protein resides in the cell membrane. Functionally, iron transport multicopper ferroxidase required for Fe(2+) high affinity uptake. Required to oxidize Fe(2+) and release it from the transporter. Essential component of copper-dependent iron transport. This Candida glabrata (strain ATCC 2001 / BCRC 20586 / JCM 3761 / NBRC 0622 / NRRL Y-65 / CBS 138) (Yeast) protein is Iron transport multicopper oxidase FET3 (FET3).